The sequence spans 191 residues: Rubrerythrin (191 aa).

A Ferritin-like diiron domain is found at 1 to 146 (MKSLKGSRTE…DFARNIKEGR (146 aa)). Fe(3+) contacts are provided by Glu20, Glu53, Glu94, Glu97, Glu128, His131, Cys158, Cys161, Cys174, and Cys177. Positions 153–191 (ATKWRCRNCGYVHEGTGAPELCPACAHPKAHFELLGINW) constitute a Rubredoxin-like domain.

Homodimer. Possesses two rubredoxin-like centers and two non-sulfur oxo-bridged di-iron centers per dimer. Requires Fe(3+) as cofactor.

It localises to the cytoplasm. In terms of biological role, may provide oxidative stress protection via catalytic reduction of intracellular hydrogen peroxide. This Nitratidesulfovibrio vulgaris (strain ATCC 29579 / DSM 644 / CCUG 34227 / NCIMB 8303 / VKM B-1760 / Hildenborough) (Desulfovibrio vulgaris) protein is Rubrerythrin (rbr).